The chain runs to 532 residues: Muscarinic acetylcholine receptor M5 (532 aa).

The Extracellular segment spans residues 1-29 (MEGDSYHNATTVNGTPVNHQPLERHRLWE). The N-linked (GlcNAc...) asparagine glycan is linked to Asn-8. A helical membrane pass occupies residues 30-53 (VITIAAVTAVVSLITIVGNVLVMI). Residues 54-66 (SFKVNSQLKTVNN) lie on the Cytoplasmic side of the membrane. The chain crosses the membrane as a helical span at residues 67–87 (YYLLSLACADLIIGIFSMNLY). Topologically, residues 88–104 (TTYILMGRWALGSLACD) are extracellular. The cysteines at positions 103 and 183 are disulfide-linked. The chain crosses the membrane as a helical span at residues 105 to 126 (LWLALDYVASNASVMNLLVISF). Topologically, residues 127-146 (DRYFSITRPLTYRAKRTPKR) are cytoplasmic. A helical transmembrane segment spans residues 147–169 (AGIMIGLAWLISFILWAPAILCW). Topologically, residues 170-191 (QYLVGKRTVPLDECQIQFLSEP) are extracellular. A helical membrane pass occupies residues 192–214 (TITFGTAIAAFYIPVSVMTILYC). Topologically, residues 215–443 (RIYRETEKRT…LVKERKAAQT (229 aa)) are cytoplasmic. Positions 262 to 294 (AQRERNQASWSSSRRSTSTTGKPSQATGPSANW) are disordered. Residues 270–281 (SWSSSRRSTSTT) show a composition bias toward low complexity. The segment covering 282-291 (GKPSQATGPS) has biased composition (polar residues). The chain crosses the membrane as a helical span at residues 444–464 (LSAILLAFIITWTPYNIMVLV). Topologically, residues 465 to 478 (STFCDKCVPVTLWH) are extracellular. Residues 479–498 (LGYWLCYVNSTVNPICYALC) form a helical membrane-spanning segment. The Cytoplasmic segment spans residues 499–532 (NRTFRKTFKMLLLCRWKKKKVEEKLYWQGNSKLP). 2 positions are modified to phosphothreonine: Thr-501 and Thr-505.

It belongs to the G-protein coupled receptor 1 family. Muscarinic acetylcholine receptor subfamily. CHRM5 sub-subfamily.

It localises to the cell membrane. The protein localises to the postsynaptic cell membrane. In terms of biological role, the muscarinic acetylcholine receptor mediates various cellular responses, including inhibition of adenylate cyclase, breakdown of phosphoinositides and modulation of potassium channels through the action of G proteins. Primary transducing effect is Pi turnover. This is Muscarinic acetylcholine receptor M5 (CHRM5) from Homo sapiens (Human).